Consider the following 348-residue polypeptide: MTLRFGVIGTGAIGREHMKRIENKLSGGKIVAVTDMNQEAAKQVVTQMKLEADVYPDDRSLVAADNVDAVLVTSWGPAHEANVLAAIEAGKYVFVEKPLATTAEGCMKIIKAEMNHGKRLVQVGFMRRYDKGYVQLKKAIDDHFIGEPLMVRCAHRNPEVGESYIDDMAIHDTLIHEIDVLHWLIDDEYESVSVSFPKKTKHALPHLRDPRVVTLETKGGVLITAEVFVNCKYGYDIQCEVIREEGIASLPEVDSISFRKRATLGTNILMDWKQRFIEAYDVELQHFIDSIKQSGEPSGPNAWDGYVAAITADAALKASNSGQKQFISLKEKPAFYSVKKENAHEAML.

Belongs to the Gfo/Idh/MocA family. As to quaternary structure, homotetramer.

It catalyses the reaction myo-inositol + NAD(+) = scyllo-inosose + NADH + H(+). The enzyme catalyses 1D-chiro-inositol + NAD(+) = scyllo-inosine + NADH + H(+). It participates in polyol metabolism; myo-inositol degradation into acetyl-CoA; acetyl-CoA from myo-inositol: step 1/7. Involved in the oxidation of myo-inositol (MI) and D-chiro-inositol (DCI) to 2-keto-myo-inositol (2KMI or 2-inosose) and 1-keto-D-chiro-inositol (1KDCI), respectively. This Halalkalibacterium halodurans (strain ATCC BAA-125 / DSM 18197 / FERM 7344 / JCM 9153 / C-125) (Bacillus halodurans) protein is Inositol 2-dehydrogenase/D-chiro-inositol 3-dehydrogenase.